The following is a 269-amino-acid chain: Carbohydrate metabolism regulator TYE7 (269 aa).

Residues 146–178 form a disordered region; that stretch reads QPKIKQEPGTKAATKPKRRAPRKKLTESQKKAH. The span at 159–168 shows a compositional bias: basic residues; the sequence is TKPKRRAPRK. The segment covering 169–178 has biased composition (basic and acidic residues); sequence KLTESQKKAH. A bHLH domain is found at 173 to 244; the sequence is SQKKAHNKIE…EKATEYILHL (72 aa).

In terms of assembly, efficient DNA binding requires dimerization with another bHLH protein.

It localises to the nucleus. Its function is as follows. Key transcriptional regulator of carbohydrate metabolism. Binds the promoter sequences of the glycolytic genes at the CANNTG motif and activates their expression during growth on either fermentable or non-fermentable carbon sources as well as under hypoxic growth conditions. Complete glycolytic activation by GAL4 and TYE7 is required for full virulence. Involved in biofilm formation and negatively regulates hyphal formation under hypoxia. Also controls the expression of the copper transport protein CTR1. The sequence is that of Carbohydrate metabolism regulator TYE7 (TYE7) from Candida albicans (strain SC5314 / ATCC MYA-2876) (Yeast).